Consider the following 49-residue polypeptide: Large ribosomal subunit protein bL33 (49 aa).

It belongs to the bacterial ribosomal protein bL33 family.

This chain is Large ribosomal subunit protein bL33, found in Pelotomaculum thermopropionicum (strain DSM 13744 / JCM 10971 / SI).